The primary structure comprises 687 residues: Adhesion G-protein coupled receptor G1 (687 aa).

Residues Met-1–Gly-25 form the signal peptide. Arg-26–Arg-33 serves as a coordination point for heparin. The Extracellular segment spans residues Arg-26–Tyr-402. Intrachain disulfides connect Cys-35/Cys-91 and Cys-121/Cys-177. Residues Asn-39, Asn-148, and Asn-171 are each glycosylated (N-linked (GlcNAc...) asparagine). Leu-190–Pro-200 serves as a coordination point for heparin. In terms of domain architecture, GAIN-B spans Asp-224 to Val-395. Asn-234, Asn-303, Asn-324, and Asn-341 each carry an N-linked (GlcNAc...) asparagine glycan. Disulfide bonds link Cys-346-Cys-377 and Cys-366-Cys-379. The interval Cys-346–Val-395 is GPS. Positions Tyr-384–Ala-397 are stachel. The chain crosses the membrane as a helical span at residues Leu-403–Ala-423. The Cytoplasmic portion of the chain corresponds to Ala-424–Asn-442. A helical membrane pass occupies residues Leu-443–Thr-463. Topologically, residues Gly-464–Arg-470 are extracellular. A helical membrane pass occupies residues Ala-471–Gly-491. The Cytoplasmic portion of the chain corresponds to Tyr-492–Lys-512. The helical transmembrane segment at Leu-513 to Val-533 threads the bilayer. Residues Asp-534–Gly-570 are Extracellular-facing. Residues Leu-571–Leu-591 form a helical membrane-spanning segment. At Arg-592–Val-603 the chain is on the cytoplasmic side. A helical transmembrane segment spans residues Leu-604–Phe-624. The Extracellular portion of the chain corresponds to Ala-625–Gln-630. A helical transmembrane segment spans residues Leu-631–Trp-651. Topologically, residues Tyr-652–Ile-687 are cytoplasmic. The interval Ser-664–Ile-687 is disordered. The segment covering Ser-678–Ile-687 has biased composition (low complexity).

The protein belongs to the G-protein coupled receptor 2 family. LN-TM7 subfamily. As to quaternary structure, heterodimer of 2 chains generated by proteolytic processing; the large extracellular N-terminal fragment (ADGRG1 NT) and the membrane-bound C-terminal fragment (ADGRG1-CT) predominantly remain associated and non-covalently linked. ADGRG1 NT self-associates in a trans-trans manner; the homophilic interaction enhances receptor signaling. Interacts with TGM2. Interacts with heparin; leading to the reduction of ADGRG1 shedding. Interacts with COL3A1. Part of a GPCR-tetraspanin complex at least consisting of ADGRG1, CD81, eventually CD9, and GNA11 in which CD81 is enhancing the association of ADGRG1 with GNA11. Autoproteolytically cleaved into 2 fragments; the large extracellular N-terminal fragment (ADGRG1 NT) and the membrane-bound C-terminal fragment (ADGRG1 CT) predominantly remain associated and non-covalently linked. Shedding to yield the secreted ADGRG1 N-terminal fragment seems to involve metalloprotease(s). In terms of processing, ubiquitinated. Undergoes polyubiquitination upon activation.

Its subcellular location is the cell membrane. It localises to the secreted. The protein localises to the membrane raft. Forms a heterodimer of 2 chains generated by proteolytic processing that remain associated through non-covalent interactions mediated by the GAIN-B domain. In the inactivated receptor, the Stachel sequence (also named stalk) is embedded in the GAIN-B domain, where it adopts a beta-strand conformation. On activation, the Stachel moves into the 7 transmembrane region and adopts a twisted hook-shaped configuration that forms contacts within the receptor, leading to coupling of a G-alpha protein, which activates signaling. The cleaved GAIN-B and N-terminal domains can then dissociate from the rest of the receptor. In terms of biological role, adhesion G-protein coupled receptor (aGPCR) for steroid hormone 17alpha-hydroxypregnenolone (17-OH), which is involved in cell adhesion and cell-cell interactions. Ligand binding causes a conformation change that triggers signaling via guanine nucleotide-binding proteins (G proteins) and modulates the activity of downstream effectors, such as RhoA pathway. ADGRG1 is coupled to G(12) and/or G(13) G proteins (GNA12 and GNA13, respectively) and mediates the activation Rho small GTPases. Acts as a potent suppressor of ferroptosis: binding to 17-OH-binding initiates signaling that down-regulates CD36 and alleviates ferroptosis-induced liver injury. Ligand-binding also induces cell adhesion activity via association with proteins such as collagen III/COL3A1 and TGM2. Mediates cell matrix adhesion in developing neurons and hematopoietic stem cells. Involved in cortical development, specifically in maintenance of the pial basement membrane integrity and in cortical lamination: association with COL3A1 in the developing brain inhibits neuronal migration via activation of the RhoA pathway. Together with TGM2, acts as a regulator of myelination and myelin repair in oligodendrocyte precursor cells. Acts as a hemostatic sensor of shear force: G protein-coupled receptor signaling is activated in response to shear force in platelets, promoting G(13) G protein signaling, and platelet shape change and aggregation in a COL3A1-dependent manner. Acts as an inhibitor of VEGFA production thereby inhibiting angiogenesis through a signaling pathway mediated by PRKCA. Plays a role in the maintenance of hematopoietic stem cells in bone marrow niche. Plays an essential role in testis development. This chain is Adhesion G-protein coupled receptor G1 (ADGRG1), found in Pan troglodytes (Chimpanzee).